The sequence spans 264 residues: 3-methyl-2-oxobutanoate hydroxymethyltransferase (264 aa).

Positions 44 and 83 each coordinate Mg(2+). Residues D44–S45, D83, and K112 contribute to the 3-methyl-2-oxobutanoate site. Position 114 (E114) interacts with Mg(2+). E181 functions as the Proton acceptor in the catalytic mechanism.

Belongs to the PanB family. In terms of assembly, homodecamer; pentamer of dimers. Mg(2+) is required as a cofactor.

The protein localises to the cytoplasm. It catalyses the reaction 3-methyl-2-oxobutanoate + (6R)-5,10-methylene-5,6,7,8-tetrahydrofolate + H2O = 2-dehydropantoate + (6S)-5,6,7,8-tetrahydrofolate. It functions in the pathway cofactor biosynthesis; coenzyme A biosynthesis. Catalyzes the reversible reaction in which hydroxymethyl group from 5,10-methylenetetrahydrofolate is transferred onto alpha-ketoisovalerate to form ketopantoate. In Pyrobaculum arsenaticum (strain DSM 13514 / JCM 11321 / PZ6), this protein is 3-methyl-2-oxobutanoate hydroxymethyltransferase.